The chain runs to 481 residues: uncharacterized protein (481 aa).

The next 11 membrane-spanning stretches (helical) occupy residues 14 to 34, 46 to 66, 90 to 110, 134 to 154, 167 to 187, 218 to 238, 258 to 278, 303 to 323, 377 to 397, 411 to 431, and 446 to 466; these read LGFC…GIFL, FAPM…IVFA, IGIY…GVLA, FSVK…INLF, TVGK…IITT, FSSM…FESI, IAIF…MLLG, IIVV…SFGA, LAVI…IALA, AFTD…LAVS, and YFSI…AYLH.

This sequence belongs to the amino acid-polyamine-organocation (APC) superfamily.

Its subcellular location is the cell membrane. Functionally, probable amino-acid or metabolite transport protein. This is an uncharacterized protein from Mycobacterium bovis (strain ATCC BAA-935 / AF2122/97).